The following is a 107-amino-acid chain: Class I hydrophobin 3 (107 aa).

The first 18 residues, 1–18 (MQFKVLAALVIGATLAAA), serve as a signal peptide directing secretion. Intrachain disulfides connect C26–C86, C33–C80, C34–C67, and C87–C100. N-linked (GlcNAc...) asparagine glycosylation is found at N35 and N89.

Belongs to the fungal hydrophobin family. Self-assembles to form functional amyloid fibrils called rodlets. Self-assembly into fibrillar rodlets occurs spontaneously at hydrophobic:hydrophilic interfaces and the rodlets further associate laterally to form amphipathic monolayers.

It localises to the secreted. Its subcellular location is the cell wall. In terms of biological role, aerial growth, conidiation, and dispersal of filamentous fungi in the environment rely upon a capability of their secreting small amphipathic proteins called hydrophobins (HPBs) with low sequence identity. Class I can self-assemble into an outermost layer of rodlet bundles on aerial cell surfaces, conferring cellular hydrophobicity that supports fungal growth, development and dispersal; whereas Class II form highly ordered films at water-air interfaces through intermolecular interactions but contribute nothing to the rodlet structure. Pnh3 is a class I hydrophobin that might be involved in the attachment of the hydrophilic wall of hyphae to the hydrophobic surface of wood under inorganic phosphate (Pi)-deficient conditions and enable the mycelium to degrade efficiently the components of wood and to acquire nutrients containing Pi. The protein is Class I hydrophobin 3 of Pholiota nameko.